Reading from the N-terminus, the 672-residue chain is Acetoacetyl-CoA synthetase (672 aa).

This sequence belongs to the ATP-dependent AMP-binding enzyme family. As to expression, abundant in male subcutaneous white adipose tissue after weaning. In white adipose tissue, it is preferentially detected in mature adipocytes but not in preadipocytes. The expression in primary preadipocytes increases during the adipocyte differentiation. In brain, it is expressed in the midbrain, pons/medulla, cerebral cortex, hippocampus and cerebellum. The expression in the cerebellum is restricted primarily to glial cells, while in the cerebral cortex, it is restricted to neuronal cells.

The protein resides in the cytoplasm. Its subcellular location is the cytosol. The catalysed reaction is acetoacetate + ATP + CoA = acetoacetyl-CoA + AMP + diphosphate. In terms of biological role, converts acetoacetate to acetoacetyl-CoA in the cytosol. Ketone body-utilizing enzyme, responsible for the synthesis of cholesterol and fatty acids. This chain is Acetoacetyl-CoA synthetase (Aacs), found in Rattus norvegicus (Rat).